We begin with the raw amino-acid sequence, 201 residues long: FMN-dependent NADH:quinone oxidoreductase (201 aa).

Residues methionine 92–leucine 95 and serine 136–glycine 139 each bind FMN.

This sequence belongs to the azoreductase type 1 family. As to quaternary structure, homodimer. FMN serves as cofactor.

The catalysed reaction is 2 a quinone + NADH + H(+) = 2 a 1,4-benzosemiquinone + NAD(+). The enzyme catalyses N,N-dimethyl-1,4-phenylenediamine + anthranilate + 2 NAD(+) = 2-(4-dimethylaminophenyl)diazenylbenzoate + 2 NADH + 2 H(+). Functionally, quinone reductase that provides resistance to thiol-specific stress caused by electrophilic quinones. Also exhibits azoreductase activity. Catalyzes the reductive cleavage of the azo bond in aromatic azo compounds to the corresponding amines. The chain is FMN-dependent NADH:quinone oxidoreductase from Coprothermobacter proteolyticus (strain ATCC 35245 / DSM 5265 / OCM 4 / BT).